The primary structure comprises 197 residues: Rac-like GTP-binding protein 5 (197 aa).

13-20 (GDGAVGKT) contacts GTP. An Effector region motif is present at residues 35 to 43 (YVPTVFDNF). GTP contacts are provided by residues 60–64 (DTAGQ) and 118–121 (TKLD). Residue C194 is modified to Cysteine methyl ester. The S-geranylgeranyl cysteine moiety is linked to residue C194. The propeptide at 195–197 (AIL) is removed in mature form.

It belongs to the small GTPase superfamily. Rho family.

Its subcellular location is the cytoplasm. The protein resides in the membrane. Inactive GDP-bound Rho GTPases reside in the cytosol, are found in a complex with Rho GDP-dissociation inhibitors (Rho GDIs), and are released from the GDI protein in order to translocate to membranes upon activation. This chain is Rac-like GTP-binding protein 5 (RAC5), found in Oryza sativa subsp. japonica (Rice).